The chain runs to 344 residues: 3-isopropylmalate dehydrogenase (344 aa).

Positions 93, 103, 131, and 215 each coordinate substrate. Residues aspartate 215, aspartate 239, and aspartate 243 each contribute to the Mg(2+) site. 273–285 (GSAPDIAGKGIAN) is a binding site for NAD(+).

Belongs to the isocitrate and isopropylmalate dehydrogenases family. LeuB type 1 subfamily. Homodimer. Mg(2+) serves as cofactor. Requires Mn(2+) as cofactor.

Its subcellular location is the cytoplasm. It carries out the reaction (2R,3S)-3-isopropylmalate + NAD(+) = 4-methyl-2-oxopentanoate + CO2 + NADH. The protein operates within amino-acid biosynthesis; L-leucine biosynthesis; L-leucine from 3-methyl-2-oxobutanoate: step 3/4. Its function is as follows. Catalyzes the oxidation of 3-carboxy-2-hydroxy-4-methylpentanoate (3-isopropylmalate) to 3-carboxy-4-methyl-2-oxopentanoate. The product decarboxylates to 4-methyl-2 oxopentanoate. The chain is 3-isopropylmalate dehydrogenase from Streptococcus mutans serotype c (strain ATCC 700610 / UA159).